A 144-amino-acid polypeptide reads, in one-letter code: Sentan (144 aa).

Positions 1-31 (MCGCRASVPSTKHYSVNPAPTTRSPPAAAGM) are disordered. Low complexity predominate over residues 18–29 (PAPTTRSPPAAA).

The protein belongs to the S-100 family.

Its subcellular location is the cell projection. It localises to the cilium. May be a component of the linker structure that bridges the ciliary membrane and peripheral singlet microtubules. In Gallus gallus (Chicken), this protein is Sentan.